Here is a 509-residue protein sequence, read N- to C-terminus: Solute carrier family 2, facilitated glucose transporter member 4 (509 aa).

At 1–23 (MPSGFQQIGSDDGEPPRQRVTGT) the chain is on the cytoplasmic side. The segment at 7-13 (QIGSDDG) is interaction with SRFBP1. A Phosphoserine modification is found at S10. The chain crosses the membrane as a helical span at residues 24 to 44 (LVLAVFSAVLGSLQFGYNIGV). Residues 45–80 (INAPQKVIEQSYNATWLGRQGPGGPDSIPQGTLTTL) are Extracellular-facing. N-linked (GlcNAc...) asparagine glycosylation is present at N57. The chain crosses the membrane as a helical span at residues 81–101 (WALSVAIFSVGGMISSFLIGI). Residues 102–110 (ISQWLGRKR) are Cytoplasmic-facing. A helical membrane pass occupies residues 111–131 (AMLANNVLAVLGGALMGLANA). The Extracellular segment spans residues 132 to 141 (AASYEILILG). A helical membrane pass occupies residues 142–162 (RFLIGAYSGLTSGLVPMYVGE). Residues 163-170 (IAPTHLRG) are Cytoplasmic-facing. The helical transmembrane segment at 171–191 (ALGTLNQLAIVIGILVAQVLG) threads the bilayer. Q177 serves as a coordination point for D-glucose. Over 192-200 (LESMLGTAT) the chain is Extracellular. The chain crosses the membrane as a helical span at residues 201–221 (LWPLLLALTVLPALLQLILLP). Residues 222 to 286 (FCPESPRYLY…QLLGSRTHRQ (65 aa)) are Cytoplasmic-facing. C223 is lipidated: S-palmitoyl cysteine. S274 is subject to Phosphoserine; by SGK1. Residues 287-307 (PLIIAVVLQLSQQLSGINAVF) form a helical membrane-spanning segment. Residues 298 to 299 (QQ) and N304 each bind D-glucose. The Extracellular portion of the chain corresponds to 308–322 (YYSTSIFESAGVGQP). Residues 323-343 (AYATIGAGVVNTVFTLVSVLL) form a helical membrane-spanning segment. Position 333 (N333) interacts with D-glucose. At 344–352 (VERAGRRTL) the chain is on the cytoplasmic side. A helical membrane pass occupies residues 353–373 (HLLGLAGMCGCAILMTVALLL). Residues 374 to 384 (LERVPAMSYVS) lie on the Extracellular side of the membrane. A helical transmembrane segment spans residues 385 to 405 (IVAIFGFVAFFEIGPGPIPWF). 2 residues coordinate D-glucose: E396 and W404. Over 406–416 (IVAELFSQGPR) the chain is Cytoplasmic. A helical membrane pass occupies residues 417–437 (PAAMAVAGFSNWTCNFIVGMG). Residues 438-444 (FQYVADA) are Extracellular-facing. The helical transmembrane segment at 445–465 (MGPYVFLLFAVLLLGFFIFTF) threads the bilayer. The Cytoplasmic segment spans residues 466 to 508 (LKVPETRGRTFDQISAAFRRTPSLLEQEVKPSTELEYLGPDEN). T486 is modified (phosphothreonine). The residue at position 488 (S488) is a Phosphoserine. The Dileucine internalization motif signature appears at 489 to 490 (LL).

Belongs to the major facilitator superfamily. Sugar transporter (TC 2.A.1.1) family. Glucose transporter subfamily. As to quaternary structure, binds to DAXX. Interacts via its N-terminus with SRFBP1. Interacts with NDUFA9. Interacts with TRARG1; the interaction is required for proper SLC2A4 recycling after insulin stimulation. Sumoylated. In terms of processing, palmitoylated. Palmitoylation by ZDHHC7 controls the insulin-dependent translocation of GLUT4 to the plasma membrane. As to expression, expressed in skeletal and cardiac muscles. Expressed in brown and white adipose tissues.

Its subcellular location is the cell membrane. The protein localises to the endomembrane system. The protein resides in the cytoplasm. It localises to the perinuclear region. It carries out the reaction D-glucose(out) = D-glucose(in). In terms of biological role, insulin-regulated facilitative glucose transporter, which plays a key role in removal of glucose from circulation. Response to insulin is regulated by its intracellular localization: in the absence of insulin, it is efficiently retained intracellularly within storage compartments in muscle and fat cells. Upon insulin stimulation, translocates from these compartments to the cell surface where it transports glucose from the extracellular milieu into the cell. The chain is Solute carrier family 2, facilitated glucose transporter member 4 from Mus musculus (Mouse).